We begin with the raw amino-acid sequence, 463 residues long: Dialkyldecalin synthase (463 aa).

FAD-binding positions include Val-13, 32–33 (ER), Ile-121, and Asp-275.

The protein belongs to the PheA/TfdB FAD monooxygenase family. As to quaternary structure, homodimer. The cofactor is FAD.

The catalysed reaction is 4-[(2E,7S,8E,10E,13R,14R,16E,18E)-14-ethyl-7,13-dihydroxy-2,16,18-trimethylicosa-2,8,10,16,18-pentaenoyl]-2-methylidene-5-oxo-2,5-dihydro-1H-pyrrol-3-olate = 4-[(1R,2R,4aS,5S,8aR)-2-[(2R,3R,5E,7E)-3-ethyl-2-hydroxy-5,7-dimethylnona-5,7-dien-1-yl]-5-hydroxy-1-methyl-1,2,4a,5,6,7,8,8a-octahydronaphthalene-1-carbonyl]-2-methylidene-5-oxo-2,5-dihydro-1H-pyrrol-3-olate. Its pathway is antibiotic biosynthesis. Its function is as follows. Involved in the biosynthesis of the spirotetramate antibiotics pyrroindomycins. Catalyzes the intramolecular cyclization forming the dialkyldecalin moiety in pyrroindomycins, via an endo-selective [4+2] cycloaddition reaction. The sequence is that of Dialkyldecalin synthase from Streptomyces rugosporus.